Here is a 302-residue protein sequence, read N- to C-terminus: Recombination-associated protein RdgC (302 aa).

It belongs to the RdgC family.

It localises to the cytoplasm. It is found in the nucleoid. In terms of biological role, may be involved in recombination. In Haemophilus influenzae (strain PittGG), this protein is Recombination-associated protein RdgC.